The sequence spans 95 residues: Small ribosomal subunit protein bS6 (95 aa).

It belongs to the bacterial ribosomal protein bS6 family.

Functionally, binds together with bS18 to 16S ribosomal RNA. This is Small ribosomal subunit protein bS6 from Geobacillus kaustophilus (strain HTA426).